The chain runs to 296 residues: ATP-dependent ribose-1-phosphate kinase (296 aa).

D242 serves as the catalytic Proton acceptor.

Belongs to the carbohydrate kinase PfkB family. Requires Mg(2+) as cofactor.

The catalysed reaction is alpha-D-ribose 1-phosphate + ATP = alpha-D-ribose 1,5-bisphosphate + ADP + H(+). Requires salt for kinase activity. 2.0 M is the optimal KCl concentration. Kinase involved in the non-carboxylating pentose bisphosphate pathway, a nucleoside degradation pathway present in some halophilic archaea. Catalyzes the ATP-dependent phosphorylation of ribose 1-phosphate (R1P) to ribose 1,5-bisphosphate (R15P). Shows weak activity towards various other phosphate acceptors, such as xylulose, 2'-deoxyguanosine and D-ribulose. ATP is the most preferred phosphate donor, followed by CTP and GTP. The protein is ATP-dependent ribose-1-phosphate kinase of Halopiger xanaduensis (strain DSM 18323 / JCM 14033 / SH-6).